Reading from the N-terminus, the 168-residue chain is Photosystem I assembly protein Ycf3 (168 aa).

3 TPR repeats span residues 35-68 (AFTY…EIDP), 72-105 (SYIL…NPFL), and 120-153 (GEQA…TPGN).

Belongs to the Ycf3 family.

It is found in the plastid. The protein localises to the chloroplast thylakoid membrane. Essential for the assembly of the photosystem I (PSI) complex. May act as a chaperone-like factor to guide the assembly of the PSI subunits. The chain is Photosystem I assembly protein Ycf3 from Coffea arabica (Arabian coffee).